The chain runs to 238 residues: Complement C1q-like protein 4 (238 aa).

The signal sequence occupies residues 1-15 (MVLLLLVAIPLLVHS). Residues 36–101 (GPRGPGPDGA…PPGPGPGGVA (66 aa)) form a disordered region. One can recognise a Collagen-like domain in the interval 53–96 (PPGAKGEVGRRGKAGLRGPPGPPGPRGPPGEPGRPGPPGPPGPG). The span at 71-96 (PPGPPGPRGPPGEPGRPGPPGPPGPG) shows a compositional bias: pro residues. Positions 105–238 (GYVPRIAFYA…TFSGFIIYPD (134 aa)) constitute a C1q domain.

In terms of assembly, forms homooligomers, predominantly dimers or trimers. Forms heterooligomers with C1QL1, C1QL2 and C1QL3, when proteins are coexpressed; this interaction does not occur after secretion. Interacts with ADGRB3. As to expression, highest expression levels in testis and adipose tissue, lower levels in skeletal muscle and kidney.

The protein localises to the secreted. In terms of biological role, may regulate the number of excitatory synapses that are formed on hippocampus neurons. Has no effect on inhibitory synapses. May inhibit adipocyte differentiation at an early stage of the process. The sequence is that of Complement C1q-like protein 4 (C1QL4) from Homo sapiens (Human).